Here is a 341-residue protein sequence, read N- to C-terminus: Ribosomal RNA small subunit methyltransferase H (341 aa).

S-adenosyl-L-methionine is bound by residues 47–49 (GGY), D64, F91, D109, and Q116.

The protein belongs to the methyltransferase superfamily. RsmH family.

The protein resides in the cytoplasm. The catalysed reaction is cytidine(1402) in 16S rRNA + S-adenosyl-L-methionine = N(4)-methylcytidine(1402) in 16S rRNA + S-adenosyl-L-homocysteine + H(+). Functionally, specifically methylates the N4 position of cytidine in position 1402 (C1402) of 16S rRNA. This chain is Ribosomal RNA small subunit methyltransferase H, found in Sinorhizobium medicae (strain WSM419) (Ensifer medicae).